Consider the following 176-residue polypeptide: Cytochrome b (176 aa).

A run of 3 helical transmembrane segments spans residues 33 to 53, 77 to 98, and 113 to 133; these read FGSLLGICLTIQILTGLFLAM, WLLRYLHANGASMFFICLYLHV, and WNMGIILLFAVMATAFMGYVL. Heme b contacts are provided by histidine 83 and histidine 97.

The protein belongs to the cytochrome b family. In terms of assembly, the cytochrome bc1 complex contains 11 subunits: 3 respiratory subunits (MT-CYB, CYC1 and UQCRFS1), 2 core proteins (UQCRC1 and UQCRC2) and 6 low-molecular weight proteins (UQCRH/QCR6, UQCRB/QCR7, UQCRQ/QCR8, UQCR10/QCR9, UQCR11/QCR10 and a cleavage product of UQCRFS1). This cytochrome bc1 complex then forms a dimer. It depends on heme b as a cofactor.

It is found in the mitochondrion inner membrane. In terms of biological role, component of the ubiquinol-cytochrome c reductase complex (complex III or cytochrome b-c1 complex) that is part of the mitochondrial respiratory chain. The b-c1 complex mediates electron transfer from ubiquinol to cytochrome c. Contributes to the generation of a proton gradient across the mitochondrial membrane that is then used for ATP synthesis. The chain is Cytochrome b (MT-CYB) from Tomopeas ravum (Blunt-eared bat).